The following is a 314-amino-acid chain: 2,3-dihydroxyphenylpropionate/2,3-dihydroxicinnamic acid 1,2-dioxygenase (314 aa).

Histidine 115 (proton donor) is an active-site residue. Histidine 179 acts as the Proton acceptor in catalysis.

It belongs to the LigB/MhpB extradiol dioxygenase family. As to quaternary structure, homotetramer. The cofactor is Fe(2+).

It catalyses the reaction 3-(2,3-dihydroxyphenyl)propanoate + O2 = (2Z,4E)-2-hydroxy-6-oxonona-2,4-dienedioate + H(+). The enzyme catalyses (2E)-3-(2,3-dihydroxyphenyl)prop-2-enoate + O2 = (2Z,4E,7E)-2-hydroxy-6-oxonona-2,4,7-trienedioate + H(+). The protein operates within aromatic compound metabolism; 3-phenylpropanoate degradation. Functionally, catalyzes the non-heme iron(II)-dependent oxidative cleavage of 2,3-dihydroxyphenylpropionic acid and 2,3-dihydroxicinnamic acid into 2-hydroxy-6-ketononadienedioate and 2-hydroxy-6-ketononatrienedioate, respectively. The chain is 2,3-dihydroxyphenylpropionate/2,3-dihydroxicinnamic acid 1,2-dioxygenase from Escherichia coli O139:H28 (strain E24377A / ETEC).